A 354-amino-acid polypeptide reads, in one-letter code: Uroporphyrinogen decarboxylase (354 aa).

Substrate contacts are provided by residues 27–31 (RQAGR), aspartate 77, tyrosine 154, threonine 209, and histidine 327.

It belongs to the uroporphyrinogen decarboxylase family. Homodimer.

It localises to the cytoplasm. It carries out the reaction uroporphyrinogen III + 4 H(+) = coproporphyrinogen III + 4 CO2. It functions in the pathway porphyrin-containing compound metabolism; protoporphyrin-IX biosynthesis; coproporphyrinogen-III from 5-aminolevulinate: step 4/4. Catalyzes the decarboxylation of four acetate groups of uroporphyrinogen-III to yield coproporphyrinogen-III. The sequence is that of Uroporphyrinogen decarboxylase from Cronobacter sakazakii (strain ATCC BAA-894) (Enterobacter sakazakii).